We begin with the raw amino-acid sequence, 446 residues long: Nuclear distribution protein PAC1-1 (446 aa).

Residues 9–41 (QAEELHKSLIAYLSSINASQSVTTLREELQIGD) enclose the LisH domain. Positions 60–86 (ISVVRLQKRILDLESKIASLQAELDSA) form a coiled coil. WD repeat units lie at residues 112–153 (SHRG…RTLK), 155–195 (HTRT…ANIR), 199–239 (GHDH…CVKT), 242–281 (TQGD…ARAS), 284–344 (GHEN…IKTL), 346–385 (GHNN…KLVK), 390–430 (AHEH…TGFR), and 432–446 (VIAT…RVFM).

It belongs to the WD repeat LIS1/nudF family. In terms of assembly, self-associates. Interacts with NDL1 and dynein.

Its subcellular location is the cytoplasm. It localises to the cytoskeleton. It is found in the spindle pole. Functionally, positively regulates the activity of the minus-end directed microtubule motor protein dynein. May enhance dynein-mediated microtubule sliding by targeting dynein to the microtubule plus end. Required for nuclear migration during vegetative growth as well as development. Required for retrograde early endosome (EE) transport from the hyphal tip. Required for localization of dynein to the mitotic spindle poles. Recruits additional proteins to the dynein complex at SPBs. This is Nuclear distribution protein PAC1-1 from Uncinocarpus reesii (strain UAMH 1704).